The primary structure comprises 1196 residues: Major DNA-binding protein (1196 aa).

A zinc finger lies at 499–512 (CNLCTFDTRHACVH). 2 consecutive short sequence motifs (required for filament formation) follow at residues 843-844 (FW) and 1142-1144 (FNF). Residues 1158-1196 (GGPGAPGPAFAGRKRAFHGDDPFGEGPPDKKGDLTLDML) are disordered. The interval 1170–1196 (RKRAFHGDDPFGEGPPDKKGDLTLDML) is required for nuclear localization. Residues 1174-1196 (FHGDDPFGEGPPDKKGDLTLDML) are compositionally biased toward basic and acidic residues.

This sequence belongs to the herpesviridae major DNA-binding protein family. Homooligomers. Forms double-helical filaments necessary for the formation of replication compartments within the host nucleus. Interacts with the origin-binding protein. Interacts with the helicase primase complex; this interaction stimulates primer synthesis activity of the helicase-primase complex. Interacts with the DNA polymerase. Interacts with the alkaline exonuclease; this interaction increases its nuclease processivity.

It localises to the host nucleus. Functionally, plays several crucial roles in viral infection. Participates in the opening of the viral DNA origin to initiate replication by interacting with the origin-binding protein. May disrupt loops, hairpins and other secondary structures present on ssDNA to reduce and eliminate pausing of viral DNA polymerase at specific sites during elongation. Promotes viral DNA recombination by performing strand-transfer, characterized by the ability to transfer a DNA strand from a linear duplex to a complementary single-stranded DNA circle. Can also catalyze the renaturation of complementary single strands. Additionally, reorganizes the host cell nucleus, leading to the formation of prereplicative sites and replication compartments. This process is driven by the protein which can form double-helical filaments in the absence of DNA. This Human herpesvirus 1 (strain KOS) (HHV-1) protein is Major DNA-binding protein.